The following is a 342-amino-acid chain: Cyclin-D3-1 (342 aa).

A compositionally biased stretch (polar residues) spans 322–334; that stretch reads VGSPATNYESSAS. The disordered stretch occupies residues 322-342; sequence VGSPATNYESSASSKRRRICR.

Belongs to the cyclin family. Cyclin D subfamily.

This is Cyclin-D3-1 (CYCD3-1) from Oryza sativa subsp. japonica (Rice).